Consider the following 353-residue polypeptide: UDP-N-acetylglucosamine--N-acetylmuramyl-(pentapeptide) pyrophosphoryl-undecaprenol N-acetylglucosamine transferase (353 aa).

UDP-N-acetyl-alpha-D-glucosamine contacts are provided by residues 10 to 12 (TGG), N124, S183, and Q283.

Belongs to the glycosyltransferase 28 family. MurG subfamily.

The protein resides in the cell inner membrane. The enzyme catalyses di-trans,octa-cis-undecaprenyl diphospho-N-acetyl-alpha-D-muramoyl-L-alanyl-D-glutamyl-meso-2,6-diaminopimeloyl-D-alanyl-D-alanine + UDP-N-acetyl-alpha-D-glucosamine = di-trans,octa-cis-undecaprenyl diphospho-[N-acetyl-alpha-D-glucosaminyl-(1-&gt;4)]-N-acetyl-alpha-D-muramoyl-L-alanyl-D-glutamyl-meso-2,6-diaminopimeloyl-D-alanyl-D-alanine + UDP + H(+). It functions in the pathway cell wall biogenesis; peptidoglycan biosynthesis. Functionally, cell wall formation. Catalyzes the transfer of a GlcNAc subunit on undecaprenyl-pyrophosphoryl-MurNAc-pentapeptide (lipid intermediate I) to form undecaprenyl-pyrophosphoryl-MurNAc-(pentapeptide)GlcNAc (lipid intermediate II). The sequence is that of UDP-N-acetylglucosamine--N-acetylmuramyl-(pentapeptide) pyrophosphoryl-undecaprenol N-acetylglucosamine transferase from Helicobacter acinonychis (strain Sheeba).